A 308-amino-acid chain; its full sequence is D-alanine--D-alanine ligase (308 aa).

In terms of domain architecture, ATP-grasp spans 102–302 (KHVAKAAGIP…FGEFLRWMVE (201 aa)). 128–183 (PMKPPYVVKPVREGSSFGVVIVKEDQSHPPQVITSSEWRYGDRVMVERYIAGREFT) provides a ligand contact to ATP. Mg(2+)-binding residues include D252, E269, and N271.

Belongs to the D-alanine--D-alanine ligase family. Mg(2+) is required as a cofactor. It depends on Mn(2+) as a cofactor.

It localises to the cytoplasm. The enzyme catalyses 2 D-alanine + ATP = D-alanyl-D-alanine + ADP + phosphate + H(+). Its pathway is cell wall biogenesis; peptidoglycan biosynthesis. Functionally, cell wall formation. The chain is D-alanine--D-alanine ligase from Rhizobium meliloti (strain 1021) (Ensifer meliloti).